Here is a 334-residue protein sequence, read N- to C-terminus: L-lactate dehydrogenase C chain (334 aa).

Residues 30–58 and Arg-100 each bind NAD(+); that span reads GQVGMACAVTILLRELADELALVDVVEDK. Substrate is bound by residues Arg-107, Asn-139, and Arg-170. NAD(+) is bound at residue Asn-139. Catalysis depends on His-194, which acts as the Proton acceptor. Thr-249 is a binding site for substrate.

Belongs to the LDH/MDH superfamily. LDH family. Homotetramer. Eye and liver.

The protein resides in the cytoplasm. The enzyme catalyses (S)-lactate + NAD(+) = pyruvate + NADH + H(+). Its pathway is fermentation; pyruvate fermentation to lactate; (S)-lactate from pyruvate: step 1/1. In Fundulus heteroclitus (Killifish), this protein is L-lactate dehydrogenase C chain (ldhc).